The chain runs to 205 residues: Thiamine-phosphate synthase (205 aa).

4-amino-2-methyl-5-(diphosphooxymethyl)pyrimidine-binding positions include 37-41 (QVREK) and Asn69. Positions 70 and 89 each coordinate Mg(2+). Ser108 provides a ligand contact to 4-amino-2-methyl-5-(diphosphooxymethyl)pyrimidine. Residue 134–136 (TGS) participates in 2-[(2R,5Z)-2-carboxy-4-methylthiazol-5(2H)-ylidene]ethyl phosphate binding. A 4-amino-2-methyl-5-(diphosphooxymethyl)pyrimidine-binding site is contributed by Lys137. 2-[(2R,5Z)-2-carboxy-4-methylthiazol-5(2H)-ylidene]ethyl phosphate is bound by residues Gly165 and 185–186 (IS).

Belongs to the thiamine-phosphate synthase family. Requires Mg(2+) as cofactor.

The catalysed reaction is 2-[(2R,5Z)-2-carboxy-4-methylthiazol-5(2H)-ylidene]ethyl phosphate + 4-amino-2-methyl-5-(diphosphooxymethyl)pyrimidine + 2 H(+) = thiamine phosphate + CO2 + diphosphate. The enzyme catalyses 2-(2-carboxy-4-methylthiazol-5-yl)ethyl phosphate + 4-amino-2-methyl-5-(diphosphooxymethyl)pyrimidine + 2 H(+) = thiamine phosphate + CO2 + diphosphate. It catalyses the reaction 4-methyl-5-(2-phosphooxyethyl)-thiazole + 4-amino-2-methyl-5-(diphosphooxymethyl)pyrimidine + H(+) = thiamine phosphate + diphosphate. It functions in the pathway cofactor biosynthesis; thiamine diphosphate biosynthesis; thiamine phosphate from 4-amino-2-methyl-5-diphosphomethylpyrimidine and 4-methyl-5-(2-phosphoethyl)-thiazole: step 1/1. Its function is as follows. Condenses 4-methyl-5-(beta-hydroxyethyl)thiazole monophosphate (THZ-P) and 2-methyl-4-amino-5-hydroxymethyl pyrimidine pyrophosphate (HMP-PP) to form thiamine monophosphate (TMP). This is Thiamine-phosphate synthase from Clostridium botulinum (strain Loch Maree / Type A3).